The sequence spans 121 residues: Cytochrome c2 iso-2 (121 aa).

Heme c is bound by residues cysteine 15, cysteine 18, histidine 19, and methionine 98.

The protein belongs to the cytochrome c family. In terms of processing, binds 1 heme c group covalently per subunit.

Cytochrome c2 is found mainly in purple, non-sulfur, photosynthetic bacteria where it functions as the electron donor to the oxidized bacteriochlorophyll in the photophosphorylation pathway. However, it may also have a role in the respiratory chain and is found in some non-photosynthetic bacteria. The polypeptide is Cytochrome c2 iso-2 (Rhodospirillum centenum (Rhodocista centenaria)).